Here is a 162-residue protein sequence, read N- to C-terminus: Caveolin-2 (162 aa).

The Cytoplasmic portion of the chain corresponds to 1–86 (MGLETEKADV…FEISKYVIYK (86 aa)). Position 19 is a phosphotyrosine; by SRC (Tyr-19). Ser-20 and Ser-23 each carry phosphoserine. Residue Tyr-27 is modified to Phosphotyrosine; by SRC. Position 36 is a phosphoserine (Ser-36). Positions 87 to 107 (FLTVFLAIPLAFIAGILFATL) form an intramembrane region, helical. At 108–162 (SCLHIWILMPFVKTCLMVLPSVQTIWKSVTDVVIGPLCTSVGRIFSSVSMQLSHD) the chain is on the cytoplasmic side.

It belongs to the caveolin family. As to quaternary structure, monomer or homodimer. Interacts with CAV1; the interaction forms a stable heterooligomeric complex that is required for targeting to lipid rafts and for caveolae formation. Tyrosine phosphorylated forms do not form heterooligomers with the Tyr-19-phosphorylated form existing as a monomer or dimer and the Tyr-27-form as a monomer only. Interacts (tyrosine phosphorylated form) with the SH2 domain-containing proteins, RASA1, NCK1 and SRC. Interacts (tyrosine phosphorylated form) with INSR; the interaction (Tyr-27-phosphorylated form) is increased on insulin stimulation. Interacts (Tyr-19-phosphorylated form) with MAPK1 (phosphorylated form); the interaction, promoted by insulin, leads to nuclear location and MAPK1 activation. Interacts with STAT3; the interaction is increased on insulin-induced tyrosine phosphorylation leading to STAT activation. Post-translationally, phosphorylated on serine and tyrosine residues. CAV1 promotes phosphorylation on Ser-23 which targets the complex to the plasma membrane, lipid rafts and caveolae. Phosphorylation on Ser-36 appears to modulate mitosis in endothelial cells. Phosphorylation on both Tyr-19 and Tyr-27 is required for insulin-induced 'Ser-727' phosphorylation of STAT3 and its activation. Phosphorylation on Tyr-19 is required for insulin-induced phosphorylation of MAPK1 and DNA binding of STAT3. Tyrosine phosphorylation is induced by both EGF and insulin. As to expression, in the retina, mainly expressed in vessels, but also diffuse expression in the inner and outer plexiform layers and in the inner nuclear layer.

It localises to the nucleus. Its subcellular location is the cytoplasm. The protein localises to the golgi apparatus membrane. It is found in the cell membrane. The protein resides in the membrane. It localises to the caveola. Functionally, may act as a scaffolding protein within caveolar membranes. Interacts directly with G-protein alpha subunits and can functionally regulate their activity. Acts as an accessory protein in conjunction with CAV1 in targeting to lipid rafts and driving caveolae formation. The Ser-36 phosphorylated form has a role in modulating mitosis in endothelial cells. Positive regulator of cellular mitogenesis of the MAPK signaling pathway. Required for the insulin-stimulated nuclear translocation and activation of MAPK1 and STAT3, and the subsequent regulation of cell cycle progression. The protein is Caveolin-2 (Cav2) of Rattus norvegicus (Rat).